The primary structure comprises 194 residues: Orotate phosphoribosyltransferase (194 aa).

117 to 125 (EDIVTTGLS) contributes to the 5-phospho-alpha-D-ribose 1-diphosphate binding site. The orotate site is built by Thr121 and Arg149.

This sequence belongs to the purine/pyrimidine phosphoribosyltransferase family. PyrE subfamily. Homodimer. It depends on Mg(2+) as a cofactor.

The enzyme catalyses orotidine 5'-phosphate + diphosphate = orotate + 5-phospho-alpha-D-ribose 1-diphosphate. Its pathway is pyrimidine metabolism; UMP biosynthesis via de novo pathway; UMP from orotate: step 1/2. Functionally, catalyzes the transfer of a ribosyl phosphate group from 5-phosphoribose 1-diphosphate to orotate, leading to the formation of orotidine monophosphate (OMP). This chain is Orotate phosphoribosyltransferase, found in Parvibaculum lavamentivorans (strain DS-1 / DSM 13023 / NCIMB 13966).